The sequence spans 868 residues: MAKKAELRRSCTFCRTRKIACSGERICNACRSRSIECVYDLEIAKGRPRLNKTTSTRASISAGPAGPSPITLEDGEPGDGGHSITSAVNPSITPLTGVMAELEVMFRENFGEDPMAAPSNQFQDRVARFNRNLAAGRASQGPSTPAGSLTYPGFLALLMQDLAETVTGKFGDLGCHPFFGPGERFYRACMLQDTTKTMFDTACLPSPSTSTPSGGEADILADYNSHLITQHLEVWMSNHPLSIIISKSLLLRDLRSQTANRVLLAVMLADAHHFADNSAKGDRLLQWAVSQLSNIPAGQEDLTTAQITLLLGWFHVCRGHSRRALCYVGYAGRITTKLASQLHESPLTGQTHINGIDRGAVEAEMIHHMYWVMLALTVWSFIQMDMPLADLLPAQLLQVLPARTTPDSTLLQLDRATDNLSTLKPQLSSLQSVWLLSHVTVLSAHLYALYPQHLRSPPEPQPWQDLMLHRLNRLLRQGRSLTQICSDSRNALLDIIVVLQKESAHGRGEPTLLALYLAVSIHLLFPRDETGHHVHNSQTFVLSDTLFQQLIASIQDLKQLFPAISSVARHDSSQPASTGSAGLHFYLLALDALGRALMYVLTVWDRVTAVEQRVWQDRLRGLLDGGLAMHDLFEYDALLQDHRWRSVKKHLKTACKGIKGVLSGSRDQGSRSSSSSVSSLDLSFALPSRPTPAMGIPTSEEGRSEMMFPTMPSASGIPSSISSSISHTSREVGLSWPGDGQILPTQEQGPRESSHPAASDLSDFDLAPFVSLGSIDSMQNGDERSRIMQQFSPNPMSLPSFWHDPQFSPAHHLVGTMPPPSLISLADLGMGERGQKRSSEKLGGLSEGDTPGTSADGGTKRRMKGMSN.

The segment at residues 11–37 is a DNA-binding region (zn(2)-C6 fungal-type); the sequence is CTFCRTRKIACSGERICNACRSRSIEC. 4 disordered regions span residues 51–88, 662–683, 715–761, and 829–868; these read NKTT…TSAV, LSGS…LDLS, SGIP…ASDL, and GMGE…GMSN. Composition is skewed to low complexity over residues 663 to 683 and 715 to 727; these read SGSR…LDLS and SGIP…SISH.

It is found in the nucleus. Its function is as follows. Transcription factor that regulates the expression of the gene cluster that mediates the biosynthesis of pyranonigrins, a family of antioxidative compounds. The chain is Transcription factor pynR from Aspergillus niger (strain ATCC MYA-4892 / CBS 513.88 / FGSC A1513).